Consider the following 533-residue polypeptide: Putative adhesin domain-containing protein LiaX (533 aa).

A binds the antibiotic daptomycin (DAP) and the antimicrobial peptide human LL-37, under physiologically relevant concentrations. Protects the OG1RF and S613 strains from LL-37-mediated killing in a concentration-dependent manner region spans residues 1–277 (MKERERVLEL…EFNYPNPQAS (277 aa)). A disordered region spans residues 63 to 89 (NALEKGESEGPTVDSFEENTQDSAEKD). The stretch at 83–186 (QDSAEKDREN…EEELKNIRKE (104 aa)) forms a coiled coil. The segment at 279–526 (IDVKVANGTV…INASTTTGSI (248 aa)) is putative adhesin region. Residues 289-526 (VFKTWDQEDV…INASTTTGSI (238 aa)) are involved in cell membrane remodeling.

May undergo proteolytic cleavage, allowing release of the N-terminal region into the extracellular environment.

The protein resides in the secreted. The protein localises to the cell wall. It localises to the cell membrane. Involved in cell membrane remodeling, perhaps acting by negative modulation of the liaFSR and liaXYZ gene clusters, thereby regulating content and localization of anionic phospholipids. Binds to the antibiotic daptomycin (DAP) and to cationic antimicrobial peptides, such as human LL-37, perhaps functioning as a sensor that activates the cell envelope stress response. In Enterococcus faecalis (strain ATCC 700802 / V583), this protein is Putative adhesin domain-containing protein LiaX.